Reading from the N-terminus, the 229-residue chain is UPF0173 metal-dependent hydrolase SH1218 (229 aa).

It belongs to the UPF0173 family.

In Staphylococcus haemolyticus (strain JCSC1435), this protein is UPF0173 metal-dependent hydrolase SH1218.